The sequence spans 379 residues: UDP-N-acetylglucosamine--N-acetylmuramyl-(pentapeptide) pyrophosphoryl-undecaprenol N-acetylglucosamine transferase (379 aa).

UDP-N-acetyl-alpha-D-glucosamine is bound by residues 19–21 (TGG), Asn-133, Arg-174, Ser-207, Ile-261, and Gln-306.

Belongs to the glycosyltransferase 28 family. MurG subfamily.

It localises to the cell inner membrane. It catalyses the reaction di-trans,octa-cis-undecaprenyl diphospho-N-acetyl-alpha-D-muramoyl-L-alanyl-D-glutamyl-meso-2,6-diaminopimeloyl-D-alanyl-D-alanine + UDP-N-acetyl-alpha-D-glucosamine = di-trans,octa-cis-undecaprenyl diphospho-[N-acetyl-alpha-D-glucosaminyl-(1-&gt;4)]-N-acetyl-alpha-D-muramoyl-L-alanyl-D-glutamyl-meso-2,6-diaminopimeloyl-D-alanyl-D-alanine + UDP + H(+). The protein operates within cell wall biogenesis; peptidoglycan biosynthesis. In terms of biological role, cell wall formation. Catalyzes the transfer of a GlcNAc subunit on undecaprenyl-pyrophosphoryl-MurNAc-pentapeptide (lipid intermediate I) to form undecaprenyl-pyrophosphoryl-MurNAc-(pentapeptide)GlcNAc (lipid intermediate II). The chain is UDP-N-acetylglucosamine--N-acetylmuramyl-(pentapeptide) pyrophosphoryl-undecaprenol N-acetylglucosamine transferase from Porphyromonas gingivalis (strain ATCC BAA-308 / W83).